The chain runs to 158 residues: Cyclic pyranopterin monophosphate synthase (158 aa).

Substrate is bound by residues 75 to 77 (LCH) and 113 to 114 (ME). Aspartate 128 is a catalytic residue.

This sequence belongs to the MoaC family. As to quaternary structure, homohexamer; trimer of dimers.

The enzyme catalyses (8S)-3',8-cyclo-7,8-dihydroguanosine 5'-triphosphate = cyclic pyranopterin phosphate + diphosphate. It functions in the pathway cofactor biosynthesis; molybdopterin biosynthesis. In terms of biological role, catalyzes the conversion of (8S)-3',8-cyclo-7,8-dihydroguanosine 5'-triphosphate to cyclic pyranopterin monophosphate (cPMP). This Paraburkholderia xenovorans (strain LB400) protein is Cyclic pyranopterin monophosphate synthase.